The following is a 128-amino-acid chain: Small ribosomal subunit protein uS11 (128 aa).

Belongs to the universal ribosomal protein uS11 family. As to quaternary structure, part of the 30S ribosomal subunit. Interacts with proteins S7 and S18. Binds to IF-3.

Functionally, located on the platform of the 30S subunit, it bridges several disparate RNA helices of the 16S rRNA. Forms part of the Shine-Dalgarno cleft in the 70S ribosome. In Solidesulfovibrio magneticus (strain ATCC 700980 / DSM 13731 / RS-1) (Desulfovibrio magneticus), this protein is Small ribosomal subunit protein uS11.